The sequence spans 71 residues: MLCLPVFITLLLLVSPSAALPVESELQRDLTQDSPKDFRIREPLLLSKMFDRSCCGSSNTGSCCGRYQRGS.

The N-terminal stretch at 1–19 (MLCLPVFITLLLLVSPSAA) is a signal peptide. A propeptide spanning residues 20–52 (LPVESELQRDLTQDSPKDFRIREPLLLSKMFDR) is cleaved from the precursor. Cystine bridges form between Cys54–Cys63 and Cys55–Cys64. Cysteine amide is present on Cys64. Positions 66 to 71 (RYQRGS) are excised as a propeptide.

It belongs to the conotoxin T superfamily. In terms of tissue distribution, expressed by the venom duct.

The protein resides in the secreted. This chain is Conotoxin ba5b, found in Conus bayani (Bayan's cone).